The following is a 223-amino-acid chain: Ribonuclease 3 (223 aa).

The region spanning 3–125 (LERLQKKLSY…IIAAIYLDAG (123 aa)) is the RNase III domain. Glu38 is a binding site for Mg(2+). Asp42 is an active-site residue. Residues Asp111 and Glu114 each coordinate Mg(2+). Glu114 is an active-site residue. The region spanning 152–222 (DPKTRLQEFL…AEQVLAKLTT (71 aa)) is the DRBM domain.

The protein belongs to the ribonuclease III family. As to quaternary structure, homodimer. The cofactor is Mg(2+).

It localises to the cytoplasm. It carries out the reaction Endonucleolytic cleavage to 5'-phosphomonoester.. Functionally, digests double-stranded RNA. Involved in the processing of primary rRNA transcript to yield the immediate precursors to the large and small rRNAs (23S and 16S). Processes some mRNAs, and tRNAs when they are encoded in the rRNA operon. Processes pre-crRNA and tracrRNA of type II CRISPR loci if present in the organism. The polypeptide is Ribonuclease 3 (Actinobacillus pleuropneumoniae serotype 5b (strain L20)).